Here is a 414-residue protein sequence, read N- to C-terminus: uncharacterized protein (414 aa).

Residues 246-360 enclose the Nop domain; the sequence is EAPNITKLAG…LNKRVEEIRR (115 aa). The interval 358–414 is disordered; it reads IRRKYPKPPKKKKKEKPKAKKKEKKGKKEKSKKKKDKKKDKKGKKERKVIGKTKSRK. Positions 361 to 414 are enriched in basic residues; that stretch reads KYPKPPKKKKKEKPKAKKKEKKGKKEKSKKKKDKKKDKKGKKERKVIGKTKSRK.

It belongs to the NOP5/NOP56 family.

This is an uncharacterized protein from Methanocaldococcus jannaschii (strain ATCC 43067 / DSM 2661 / JAL-1 / JCM 10045 / NBRC 100440) (Methanococcus jannaschii).